Consider the following 306-residue polypeptide: Stimulator of interferon genes protein 5 (306 aa).

A disordered region spans residues 1–50 (MMSNDSQSEKRTAKWTGSGTPIAEGEESSSPSAHQTRQKATAADDDDDQQ). Positions 119, 180, and 186 each coordinate 2',3'-cGAMP.

Belongs to the STING family.

Facilitator of innate immune signaling that acts as a sensor of second messenger signals produced by cyclic GMP-AMP synthase-like receptors (cGLRs) and promotes the production of type I interferon. Innate immune response is triggered in response to nucleotides from viruses and bacteria delivered to the cytoplasm. Acts by binding cyclic dinucleotides: recognizes and binds 2'-3' linked cGAMP (2'-3'-cGAMP), a second messengers produced by cGLRs in response to nucleotides in the cytosol, such as double-stranded RNA (dsRNA). Upon binding to 2'-3'-cGAMP, oligomerizes and promotes the recruitment and subsequent activation of the transcription factor IRF3 to induce expression of type I interferon. In Stylophora pistillata (Smooth cauliflower coral), this protein is Stimulator of interferon genes protein 5.